The following is a 120-amino-acid chain: Immunoglobulin kappa variable 2D-26 (120 aa).

An N-terminal signal peptide occupies residues 1 to 20; the sequence is MRLPAQLLGLLMLWVPGSSA. Residues 21–43 are framework-1; it reads EIVMTQTPLSLSITPGEQASMSC. The Ig-like domain occupies 21-120; sequence EIVMTQTPLS…YYCMQDAQDP (100 aa). The cysteines at positions 43 and 113 are disulfide-linked. The complementarity-determining-1 stretch occupies residues 44–59; it reads RSSQSLLHSDGYTYLY. The segment at 60 to 74 is framework-2; that stretch reads WFLQKARPVSTLLIY. The tract at residues 75 to 81 is complementarity-determining-2; sequence EVSNRFS. The interval 82–113 is framework-3; that stretch reads GVPDRFSGSGSGTDFTLKISRVEAEDFGVYYC. Residues 114–120 form a complementarity-determining-3 region; sequence MQDAQDP.

In terms of assembly, immunoglobulins are composed of two identical heavy chains and two identical light chains; disulfide-linked.

It localises to the secreted. It is found in the cell membrane. Functionally, v region of the variable domain of immunoglobulin light chains that participates in the antigen recognition. Immunoglobulins, also known as antibodies, are membrane-bound or secreted glycoproteins produced by B lymphocytes. In the recognition phase of humoral immunity, the membrane-bound immunoglobulins serve as receptors which, upon binding of a specific antigen, trigger the clonal expansion and differentiation of B lymphocytes into immunoglobulins-secreting plasma cells. Secreted immunoglobulins mediate the effector phase of humoral immunity, which results in the elimination of bound antigens. The antigen binding site is formed by the variable domain of one heavy chain, together with that of its associated light chain. Thus, each immunoglobulin has two antigen binding sites with remarkable affinity for a particular antigen. The variable domains are assembled by a process called V-(D)-J rearrangement and can then be subjected to somatic hypermutations which, after exposure to antigen and selection, allow affinity maturation for a particular antigen. The chain is Immunoglobulin kappa variable 2D-26 from Homo sapiens (Human).